We begin with the raw amino-acid sequence, 345 residues long: uncharacterized protein (345 aa).

The protein belongs to the proline racemase family.

This is an uncharacterized protein from Bacillus anthracis.